The primary structure comprises 38 residues: Photosystem II reaction center protein L (38 aa).

The helical transmembrane segment at 17 to 37 (SLYWGLLLIFVLAVLFSNYFF) threads the bilayer.

Belongs to the PsbL family. As to quaternary structure, PSII is composed of 1 copy each of membrane proteins PsbA, PsbB, PsbC, PsbD, PsbE, PsbF, PsbH, PsbI, PsbJ, PsbK, PsbL, PsbM, PsbT, PsbX, PsbY, PsbZ, Psb30/Ycf12, at least 3 peripheral proteins of the oxygen-evolving complex and a large number of cofactors. It forms dimeric complexes.

Its subcellular location is the plastid. The protein resides in the chloroplast thylakoid membrane. One of the components of the core complex of photosystem II (PSII). PSII is a light-driven water:plastoquinone oxidoreductase that uses light energy to abstract electrons from H(2)O, generating O(2) and a proton gradient subsequently used for ATP formation. It consists of a core antenna complex that captures photons, and an electron transfer chain that converts photonic excitation into a charge separation. This subunit is found at the monomer-monomer interface and is required for correct PSII assembly and/or dimerization. The protein is Photosystem II reaction center protein L of Psilotum nudum (Whisk fern).